We begin with the raw amino-acid sequence, 174 residues long: Guided entry of tail-anchored proteins factor 1 (174 aa).

Residues 1 to 8 (MSAAEADR) lie on the Lumenal side of the membrane. The helical transmembrane segment at 9-29 (WAWLLVLSFVFGCNVLRILLP) threads the bilayer. Over 30 to 99 (SFSFFMSRVL…VKARTAQLAK (70 aa)) the chain is Cytoplasmic. Residues 39–94 (LQKDAEQESQMRAEIQGMKQELSTVNMMDEFARYARLERKINKMTDKLKTHVKART) are a coiled coil. The segment at 39-97 (LQKDAEQESQMRAEIQGMKQELSTVNMMDEFARYARLERKINKMTDKLKTHVKARTAQL) is interaction with GET3/TRC40. Residues 100 to 120 (IKWVISVAFYILQAALMVSLI) traverse the membrane as a helical segment. Over 121–148 (WKYYSVPVAVVPSKWITPLDRLVAFPTR) the chain is Lumenal. Residues 149–169 (VAGGVGITCWILVCNKVVAIV) traverse the membrane as a helical segment. Over 170–174 (LHPFS) the chain is Cytoplasmic.

The protein belongs to the WRB/GET1 family. Component of the Golgi to ER traffic (GET) complex, which is composed of GET1/WRB, CAMLG/GET2 and GET3. Within the complex, GET1 and CAMLG form a heterotetramer which is stabilized by phosphatidylinositol binding and which binds to the GET3 homodimer. Interacts with CAMLG (via C-terminus). GET3 shows a higher affinity for CAMLG than for GET1.

The protein resides in the endoplasmic reticulum membrane. Functionally, required for the post-translational delivery of tail-anchored (TA) proteins to the endoplasmic reticulum. Together with CAMLG/GET2, acts as a membrane receptor for soluble GET3/TRC40, which recognizes and selectively binds the transmembrane domain of TA proteins in the cytosol. Required to ensure correct topology and ER insertion of CAMLG. The protein is Guided entry of tail-anchored proteins factor 1 of Bos taurus (Bovine).